A 585-amino-acid polypeptide reads, in one-letter code: A-type ATP synthase subunit A (585 aa).

An ATP-binding site is contributed by 231 to 238 (GPFGSGKT).

The protein belongs to the ATPase alpha/beta chains family. As to quaternary structure, has multiple subunits with at least A(3), B(3), C, D, E, F, H, I and proteolipid K(x).

It localises to the cell membrane. The enzyme catalyses ATP + H2O + 4 H(+)(in) = ADP + phosphate + 5 H(+)(out). Component of the A-type ATP synthase that produces ATP from ADP in the presence of a proton gradient across the membrane. The A chain is the catalytic subunit. This Desulfurococcus sp. (strain SY) protein is A-type ATP synthase subunit A.